The sequence spans 95 residues: Small ribosomal subunit protein bS6 (95 aa).

It belongs to the bacterial ribosomal protein bS6 family.

Its function is as follows. Binds together with bS18 to 16S ribosomal RNA. In Clostridium beijerinckii (strain ATCC 51743 / NCIMB 8052) (Clostridium acetobutylicum), this protein is Small ribosomal subunit protein bS6.